We begin with the raw amino-acid sequence, 490 residues long: MYLVVCWGRVTGNMISTRHCFSRCKSRSVRVIKATAMLFVAAMLFLALHMNFSHEASQQNLHRAAPISSPTTISRSTVQIRNATHDFLPASSTPMKDELIETESEFVDGFQRNEVIACSDTSEEFRTDSKRITLVNSQSGVPCPIRPPALAGRFVPSKKSSTYHELAAMFPDVQDGGHYTPRMCTPAEKTAIIIPYRNRCRHLYTLLPNLIPMLMRQNVDFTIFVIEQTTPETFNKGILFNAGYLEALKVDNYDCFILHDVDMIPIDDRNMYRCNKMGPVHFSPGVNKFKYKLFYSGLFGGVVGFTREQFRLINGASNLYFGWGGEDDDLRNRAVHMKLPLLRKTLAHGLYDMVSHVEAGWNVNPHSKGAHSLYDMLNKALGVQAGWNVHPNSKWPLRLFDSVNHAPAEGAGWNVNPDRFKIYSTSRQRQHVDGINSLVYNVTWYRTSPLYTWVGVGFNKTVITNSIPEDLRIGPEADNTYLTGNFTIIS.

Residues 1-30 are Cytoplasmic-facing; it reads MYLVVCWGRVTGNMISTRHCFSRCKSRSVR. A helical; Signal-anchor for type II membrane protein transmembrane segment spans residues 31–50; the sequence is VIKATAMLFVAAMLFLALHM. 5 N-linked (GlcNAc...) asparagine glycosylation sites follow: Asn-51, Asn-82, Asn-441, Asn-459, and Asn-485. The Lumenal segment spans residues 51–490; sequence NFSHEASQQN…YLTGNFTIIS (440 aa).

Belongs to the glycosyltransferase 7 family.

Its subcellular location is the golgi apparatus membrane. It carries out the reaction an N-acetyl-beta-D-glucosaminyl derivative + UDP-N-acetyl-alpha-D-glucosamine = an N-acetyl-beta-D-glucosaminyl-(1-&gt;4)-N-acetyl-beta-D-glucosaminyl derivative + UDP + H(+). The protein operates within protein modification; protein glycosylation. The sequence is that of Beta-N-acetyl-D-glucosaminide beta-1,4-N-acetylglucosaminyl-transferase (GNT) from Lymnaea stagnalis (Great pond snail).